The chain runs to 1024 residues: Multidrug resistance protein MdtC (1024 aa).

Helical transmembrane passes span 12-32, 333-353, 360-380, 387-407, 435-455, 469-489, 528-548, 853-873, 875-895, 897-917, 953-973, and 984-1004; these read VATT…FSLL, EVER…FIFL, LIPA…MYLC, LSLM…IVVL, VLSM…MAGL, VAIG…CAWL, WVMV…ISIP, LWLI…LYES, VHPL…LLAL, LFDA…IGIV, PIIM…LSSG, and ITIV…TPVI.

Belongs to the resistance-nodulation-cell division (RND) (TC 2.A.6) family. MdtC subfamily. As to quaternary structure, part of a tripartite efflux system composed of MdtA, MdtB and MdtC. MdtC forms a heteromultimer with MdtB.

It is found in the cell inner membrane. The protein is Multidrug resistance protein MdtC of Yersinia pestis bv. Antiqua (strain Antiqua).